The chain runs to 349 residues: Phenylalanine--tRNA ligase alpha subunit (349 aa).

Glu-258 contacts Mg(2+).

It belongs to the class-II aminoacyl-tRNA synthetase family. Phe-tRNA synthetase alpha subunit type 1 subfamily. Tetramer of two alpha and two beta subunits. Requires Mg(2+) as cofactor.

Its subcellular location is the cytoplasm. It catalyses the reaction tRNA(Phe) + L-phenylalanine + ATP = L-phenylalanyl-tRNA(Phe) + AMP + diphosphate + H(+). In Rickettsia bellii (strain RML369-C), this protein is Phenylalanine--tRNA ligase alpha subunit.